The following is a 125-amino-acid chain: Large ribosomal subunit protein bL12 (125 aa).

This sequence belongs to the bacterial ribosomal protein bL12 family. Homodimer. Part of the ribosomal stalk of the 50S ribosomal subunit. Forms a multimeric L10(L12)X complex, where L10 forms an elongated spine to which 2 to 4 L12 dimers bind in a sequential fashion. Binds GTP-bound translation factors.

Functionally, forms part of the ribosomal stalk which helps the ribosome interact with GTP-bound translation factors. Is thus essential for accurate translation. The polypeptide is Large ribosomal subunit protein bL12 (Heliobacterium modesticaldum (strain ATCC 51547 / Ice1)).